Consider the following 193-residue polypeptide: Ribonuclease HII (193 aa).

Residues Cys15–Cys193 enclose the RNase H type-2 domain. Positions 21, 22, and 112 each coordinate a divalent metal cation.

The protein belongs to the RNase HII family. Mn(2+) serves as cofactor. Mg(2+) is required as a cofactor.

It localises to the cytoplasm. It catalyses the reaction Endonucleolytic cleavage to 5'-phosphomonoester.. Functionally, endonuclease that specifically degrades the RNA of RNA-DNA hybrids. The polypeptide is Ribonuclease HII (Rickettsia conorii (strain ATCC VR-613 / Malish 7)).